We begin with the raw amino-acid sequence, 394 residues long: Beta-ketothiolase BktB (394 aa).

Cys90 functions as the Acyl-thioester intermediate in the catalytic mechanism. Residues His350 and Cys380 each act as proton acceptor in the active site.

It belongs to the thiolase-like superfamily. Thiolase family.

The catalysed reaction is an acyl-CoA + acetyl-CoA = a 3-oxoacyl-CoA + CoA. It carries out the reaction 2 acetyl-CoA = acetoacetyl-CoA + CoA. Required for efficient production of poly(beta-hydroxybutyrate-co-beta-hydroxyvalerate) (PHBV). Catalyzes the condensation of acetyl-CoA and propionyl-CoA to form beta-ketovaleryl-CoA, and the condensation of two acetyl-CoA molecules to form acetoacetyl-CoA. This Cupriavidus necator (strain ATCC 17699 / DSM 428 / KCTC 22496 / NCIMB 10442 / H16 / Stanier 337) (Ralstonia eutropha) protein is Beta-ketothiolase BktB (bktB).